The following is a 419-amino-acid chain: Protein FAM217A (419 aa).

Disordered regions lie at residues 1–23 (MGRK…QENL), 100–119 (DKRN…LSES), 234–298 (PSSS…SRSL), and 362–388 (PIPL…HRKS). Over residues 7 to 23 (ESCSANPHSSSISQENL) the composition is skewed to polar residues. The span at 284–298 (SLSTAGKSKSNSRSL) shows a compositional bias: polar residues. Over residues 378–388 (PRTKKKCHRKS) the composition is skewed to basic residues.

It belongs to the FAM217 family.

This Rattus norvegicus (Rat) protein is Protein FAM217A (Fam217a).